We begin with the raw amino-acid sequence, 413 residues long: Protein CDKN2AIP homolog B (413 aa).

The XRN2-binding (XTBD) domain maps to 21-118; that stretch reads LERVRGQCES…TTRDELVAKV (98 aa). The segment at 118–266 is disordered; it reads VKKRGNSSSN…PTRRFTTEHT (149 aa). A compositionally biased stretch (basic and acidic residues) spans 183–193; sequence NKREAHSRTDV.

Belongs to the CARF family.

It is found in the nucleus. The protein resides in the nucleoplasm. May regulate DNA damage response and cell proliferation. The protein is Protein CDKN2AIP homolog B (cdkn2aip-b) of Xenopus laevis (African clawed frog).